We begin with the raw amino-acid sequence, 359 residues long: Transcription factor bHLH130 (359 aa).

A Phosphoserine modification is found at Ser-60. Positions 161–186 are disordered; the sequence is EEDEESPSNSNGLRRHCSLSSRPPSS. Positions 167 to 184 are enriched in polar residues; sequence PSNSNGLRRHCSLSSRPP. Positions 285–335 constitute a bHLH domain; that stretch reads CATHPRSIAERVRRTRISERMRKLQELVPNMDKQTNTSDMLDLAVDYIKDL.

As to quaternary structure, homodimer.

It is found in the nucleus. This is Transcription factor bHLH130 (BHLH130) from Arabidopsis thaliana (Mouse-ear cress).